The following is an 85-amino-acid chain: Keratin-associated protein 7-1 (85 aa).

The 12 X 2 AA repeats of G-[YCGS] stretch occupies residues 37-82 (GSPLGYGCNGYSSLGYGFGGSSFSNLGCGYGGSFYRPWGSGSGFGY).

Belongs to the KRTAP type 7 family. Interacts with wool keratins. Wool.

In the wool cortex, wool keratin intermediate filaments are embedded in an interfilamentous matrix, consisting of hair keratin-associated proteins (KRTAP), which are essential for the formation of a rigid and resistant wool shaft through their extensive disulfide bond cross-linking with abundant cysteine residues of wool keratins. The matrix proteins include the high-sulfur and high-glycine-tyrosine keratins. In Ovis aries (Sheep), this protein is Keratin-associated protein 7-1 (KRTAP7-1).